We begin with the raw amino-acid sequence, 431 residues long: DNA polymerase delta subunit 3 (431 aa).

The segment at 64-80 is necessary for function, possibly resulting from its inability to interact with PolD2; that stretch reads QGSDSGEDLYSVVLESR. The disordered stretch occupies residues 128–431; that stretch reads PGAGKIVPSA…AGIMNFFSKK (304 aa). The span at 156 to 171 shows a compositional bias: low complexity; that stretch reads SKSAVKLEPSKSSLKS. Composition is skewed to basic and acidic residues over residues 172–200 and 252–271; these read EPAK…EQAS and SPPE…NKKE. Positions 278–290 are enriched in low complexity; it reads PSPTKKPTTANTS. Positions 294 to 307 are enriched in acidic residues; that stretch reads FDEESAESSDEEEK. Composition is skewed to basic and acidic residues over residues 308 to 328 and 343 to 362; these read LDML…EKAS and QPPK…KMDT. Over residues 387–411 the composition is skewed to low complexity; it reads PANKKVSPKAAAPVNKKKSPPSAAK.

In terms of assembly, component of both the DNA polymerase delta and DNA polymerase zeta complexes. The DNA polymerase delta complex consists of three subunits: the catalytic subunit PolD1 and two accessory subunits PolD2/Pol31 and PolD3/Pol32. Within the delta complex, interacts with both PolD1 and PolD2. Component of the DNA polymerase zeta complex consisting of four subunits: the catalytic subunit PolZ1 and three accessory subunits PolZ2/Rev7, PolD2/Pol31 and PolD3/Pol32. Expressed in ovaries (at the protein level). Expressed in ovaries.

The protein resides in the nucleus. Its subcellular location is the nucleoplasm. Its function is as follows. Accessory component of the DNA polymerase delta complex and possibly the DNA polymerase zeta complex. As a component of the delta complex, participates in high fidelity genome replication, including lagging strand synthesis, DNA recombination and repair. Required to recruit the DNA polymerase delta complex to the nucleus of rapidly dividing embryonic cells, and as a consequence is essential for genome replication during the earliest cell cycles. Increases the efficiency and processivity of DNA synthesis of the DNA polymerases during mitotic DNA replication and repair. During development this function is essential for preventing replication stress that results in the formation of chromosomal fragile sites (CFS) such as chromosomal breaks. Ensures genomic stability by promoting several types of DNA repair mechanisms including repairing broken dicentric chromosomes through homolog-dependent break-induced replication (BIR). During homologous recombination (HR) repair, required for maintaining the processivity of the delta complex during break-induced replication; a form of HR that requires extensive DNA synthesis such as the repair of large gaps. Able to suppress position effect variegation and may therefore have a role in the induction of chromatin state changes that likely include its activities in DNA replication and repair. The polypeptide is DNA polymerase delta subunit 3 (Drosophila melanogaster (Fruit fly)).